Consider the following 202-residue polypeptide: Glycerol-3-phosphate acyltransferase (202 aa).

Transmembrane regions (helical) follow at residues 2–22 (MIVL…GVII), 54–74 (FVVT…PLLF), 85–105 (FFTN…YPIF), 118–138 (AGVV…IFFL), 140–160 (LYLT…CVIG), and 162–182 (LIIH…LLIF).

It belongs to the PlsY family. Probably interacts with PlsX.

It is found in the cell membrane. The catalysed reaction is an acyl phosphate + sn-glycerol 3-phosphate = a 1-acyl-sn-glycero-3-phosphate + phosphate. It functions in the pathway lipid metabolism; phospholipid metabolism. In terms of biological role, catalyzes the transfer of an acyl group from acyl-phosphate (acyl-PO(4)) to glycerol-3-phosphate (G3P) to form lysophosphatidic acid (LPA). This enzyme utilizes acyl-phosphate as fatty acyl donor, but not acyl-CoA or acyl-ACP. The chain is Glycerol-3-phosphate acyltransferase from Staphylococcus carnosus (strain TM300).